Here is a 1376-residue protein sequence, read N- to C-terminus: DNA-directed RNA polymerase subunit beta'' (1376 aa).

Zn(2+)-binding residues include Cys-220, Cys-293, Cys-300, and Cys-303.

The protein belongs to the RNA polymerase beta' chain family. RpoC2 subfamily. In plastids the minimal PEP RNA polymerase catalytic core is composed of four subunits: alpha, beta, beta', and beta''. When a (nuclear-encoded) sigma factor is associated with the core the holoenzyme is formed, which can initiate transcription. Zn(2+) serves as cofactor.

It localises to the plastid. The protein localises to the chloroplast. The enzyme catalyses RNA(n) + a ribonucleoside 5'-triphosphate = RNA(n+1) + diphosphate. Functionally, DNA-dependent RNA polymerase catalyzes the transcription of DNA into RNA using the four ribonucleoside triphosphates as substrates. In Arabidopsis thaliana (Mouse-ear cress), this protein is DNA-directed RNA polymerase subunit beta''.